Reading from the N-terminus, the 332-residue chain is L-lactate dehydrogenase A chain (332 aa).

NAD(+) is bound by residues 29–57 and R99; that span reads GAVG…IEDK. Positions 106, 138, and 169 each coordinate substrate. N138 is a binding site for NAD(+). The active-site Proton acceptor is the H193. Position 248 (T248) interacts with substrate.

Belongs to the LDH/MDH superfamily. LDH family. As to quaternary structure, homotetramer.

The protein resides in the cytoplasm. The catalysed reaction is (S)-lactate + NAD(+) = pyruvate + NADH + H(+). It functions in the pathway fermentation; pyruvate fermentation to lactate; (S)-lactate from pyruvate: step 1/1. Its function is as follows. Interconverts simultaneously and stereospecifically pyruvate and lactate with concomitant interconversion of NADH and NAD(+). The sequence is that of L-lactate dehydrogenase A chain (LDHA) from Trachemys scripta elegans (Red-eared slider turtle).